Here is an 81-residue protein sequence, read N- to C-terminus: Acyl carrier protein (81 aa).

Residues 2–80 enclose the Carrier domain; sequence ASEQEILSGL…DAVAYISQAQ (79 aa). S40 carries the post-translational modification O-(pantetheine 4'-phosphoryl)serine.

Belongs to the acyl carrier protein (ACP) family. Post-translationally, 4'-phosphopantetheine is transferred from CoA to a specific serine of apo-ACP by AcpS. This modification is essential for activity because fatty acids are bound in thioester linkage to the sulfhydryl of the prosthetic group.

Its subcellular location is the cytoplasm. Its pathway is lipid metabolism; fatty acid biosynthesis. Carrier of the growing fatty acid chain in fatty acid biosynthesis. The polypeptide is Acyl carrier protein (Kineococcus radiotolerans (strain ATCC BAA-149 / DSM 14245 / SRS30216)).